Reading from the N-terminus, the 1067-residue chain is Probable isoleucine--tRNA ligase, cytoplasmic (1067 aa).

The 'HIGH' region signature appears at 47 to 57; the sequence is PFATGLPHYGH. Positions 604–608 match the 'KMSKS' region motif; that stretch reads KMSKR. Lys607 contacts ATP.

This sequence belongs to the class-I aminoacyl-tRNA synthetase family.

It localises to the cytoplasm. It carries out the reaction tRNA(Ile) + L-isoleucine + ATP = L-isoleucyl-tRNA(Ile) + AMP + diphosphate. This Dictyostelium discoideum (Social amoeba) protein is Probable isoleucine--tRNA ligase, cytoplasmic (ileS).